The following is a 274-amino-acid chain: ATP synthase subunit delta (274 aa).

Belongs to the ATPase delta chain family. In terms of assembly, F-type ATPases have 2 components, F(1) - the catalytic core - and F(0) - the membrane proton channel. F(1) has five subunits: alpha(3), beta(3), gamma(1), delta(1), epsilon(1). F(0) has three main subunits: a(1), b(2) and c(10-14). The alpha and beta chains form an alternating ring which encloses part of the gamma chain. F(1) is attached to F(0) by a central stalk formed by the gamma and epsilon chains, while a peripheral stalk is formed by the delta and b chains.

It localises to the cell membrane. In terms of biological role, f(1)F(0) ATP synthase produces ATP from ADP in the presence of a proton or sodium gradient. F-type ATPases consist of two structural domains, F(1) containing the extramembraneous catalytic core and F(0) containing the membrane proton channel, linked together by a central stalk and a peripheral stalk. During catalysis, ATP synthesis in the catalytic domain of F(1) is coupled via a rotary mechanism of the central stalk subunits to proton translocation. This protein is part of the stalk that links CF(0) to CF(1). It either transmits conformational changes from CF(0) to CF(1) or is implicated in proton conduction. The chain is ATP synthase subunit delta from Acidothermus cellulolyticus (strain ATCC 43068 / DSM 8971 / 11B).